A 414-amino-acid chain; its full sequence is NADH-quinone oxidoreductase subunit D (414 aa).

This sequence belongs to the complex I 49 kDa subunit family. In terms of assembly, NDH-1 is composed of 14 different subunits. Subunits NuoB, C, D, E, F, and G constitute the peripheral sector of the complex.

The protein localises to the cell inner membrane. It catalyses the reaction a quinone + NADH + 5 H(+)(in) = a quinol + NAD(+) + 4 H(+)(out). In terms of biological role, NDH-1 shuttles electrons from NADH, via FMN and iron-sulfur (Fe-S) centers, to quinones in the respiratory chain. The immediate electron acceptor for the enzyme in this species is believed to be ubiquinone. Couples the redox reaction to proton translocation (for every two electrons transferred, four hydrogen ions are translocated across the cytoplasmic membrane), and thus conserves the redox energy in a proton gradient. In Akkermansia muciniphila (strain ATCC BAA-835 / DSM 22959 / JCM 33894 / BCRC 81048 / CCUG 64013 / CIP 107961 / Muc), this protein is NADH-quinone oxidoreductase subunit D.